The primary structure comprises 213 residues: Glycerol-3-phosphate acyltransferase (213 aa).

6 helical membrane passes run 3 to 23, 55 to 75, 80 to 100, 110 to 130, 142 to 162, and 163 to 183; these read ILLL…LWIG, ITFL…IWLG, SPLI…FTGF, AGVL…VFAL, SITA…IHFL, and LDGY…VIIF.

Belongs to the PlsY family. In terms of assembly, probably interacts with PlsX.

It localises to the cell membrane. It catalyses the reaction an acyl phosphate + sn-glycerol 3-phosphate = a 1-acyl-sn-glycero-3-phosphate + phosphate. It participates in lipid metabolism; phospholipid metabolism. Functionally, catalyzes the transfer of an acyl group from acyl-phosphate (acyl-PO(4)) to glycerol-3-phosphate (G3P) to form lysophosphatidic acid (LPA). This enzyme utilizes acyl-phosphate as fatty acyl donor, but not acyl-CoA or acyl-ACP. In Streptococcus thermophilus (strain CNRZ 1066), this protein is Glycerol-3-phosphate acyltransferase.